The sequence spans 438 residues: Innexin inx7 (438 aa).

Residues 1–23 (MLNTFSSVRQYLKFDLTRVVIDN) are Cytoplasmic-facing. Residues 24–44 (IVFKLHYRWTFVILLVATLLI) form a helical membrane-spanning segment. At 45 to 58 (TSRQYIGEHIQCLS) the chain is on the extracellular side. The helical transmembrane segment at 59 to 79 (DGVVSPVINTFCFFTPTFTVV) threads the bilayer. The Cytoplasmic segment spans residues 80–112 (RDQNQTAYRPGSEPPGIGAFDPEKDTIKRHAYY). A helical transmembrane segment spans residues 113–133 (QWVPFVLFFQALCFYIPHALW). The Extracellular segment spans residues 134–283 (KSWEGGRIKA…VMALNIMNEK (150 aa)). A helical membrane pass occupies residues 284 to 304 (IYIILWFWYAFLLIVTVLGLL). The Cytoplasmic portion of the chain corresponds to 305-438 (WRILTLCFYR…STSDMAKLPV (134 aa)). 2 disordered regions span residues 381–402 (NDVN…PELS) and 415–438 (RRNG…KLPV). The span at 418–431 (GSPSAGGAQGPSTS) shows a compositional bias: low complexity.

It belongs to the pannexin family. As to expression, expressed around gut lobes in embryonic stages 15-17.

It localises to the cell membrane. The protein resides in the cell junction. It is found in the gap junction. Structural components of the gap junctions. The polypeptide is Innexin inx7 (Inx7) (Drosophila melanogaster (Fruit fly)).